A 131-amino-acid polypeptide reads, in one-letter code: Biogenesis of lysosome-related organelles complex 1 subunit 5 (131 aa).

The protein belongs to the BLOC1S5 family. As to quaternary structure, component of the biogenesis of lysosome-related organelles complex-1 (BLOC-1) composed at least of blos-1, blos-2, blos-4, dsbn-1, glo-2, mutd-1 and snpn-1.

In terms of biological role, component of the biogenesis of lysosome-related organelles complex-1 (BLOC-1) involved in gut granule biogenesis. The sequence is that of Biogenesis of lysosome-related organelles complex 1 subunit 5 (mutd-1) from Caenorhabditis elegans.